The chain runs to 252 residues: Large ribosomal subunit protein uL10m (252 aa).

The transit peptide at 1-24 (MAATLCCRLLPKAGWVPLTQSVRH) directs the protein to the mitochondrion.

Belongs to the universal ribosomal protein uL10 family. As to quaternary structure, component of the mitochondrial ribosome large subunit (39S) which comprises a 16S rRNA and about 50 distinct proteins.

The protein resides in the mitochondrion. The chain is Large ribosomal subunit protein uL10m (mrpl10) from Danio rerio (Zebrafish).